A 251-amino-acid polypeptide reads, in one-letter code: Triosephosphate isomerase (251 aa).

9-11 (NWK) provides a ligand contact to substrate. The active-site Electrophile is His95. Glu167 acts as the Proton acceptor in catalysis. Residues Gly173, Ser213, and 234-235 (GG) contribute to the substrate site. The residue at position 213 (Ser213) is a Phosphoserine.

This sequence belongs to the triosephosphate isomerase family. As to quaternary structure, homodimer.

The protein localises to the cytoplasm. The catalysed reaction is D-glyceraldehyde 3-phosphate = dihydroxyacetone phosphate. It participates in carbohydrate biosynthesis; gluconeogenesis. The protein operates within carbohydrate degradation; glycolysis; D-glyceraldehyde 3-phosphate from glycerone phosphate: step 1/1. Functionally, involved in the gluconeogenesis. Catalyzes stereospecifically the conversion of dihydroxyacetone phosphate (DHAP) to D-glyceraldehyde-3-phosphate (G3P). This chain is Triosephosphate isomerase, found in Bacillus mycoides (strain KBAB4) (Bacillus weihenstephanensis).